The primary structure comprises 428 residues: Adenylosuccinate synthetase (428 aa).

Residues 12 to 18 and 40 to 42 each bind GTP; these read GDEGKGK and GHT. Asp13 (proton acceptor) is an active-site residue. Mg(2+)-binding residues include Asp13 and Gly40. IMP-binding positions include 13–16, 38–41, Thr130, Arg144, Gln224, Thr239, and Arg303; these read DEGK and NAGH. His41 (proton donor) is an active-site residue. 299–305 provides a ligand contact to substrate; sequence VTTGRSR. GTP contacts are provided by residues Arg305, 331 to 333, and 413 to 415; these read KID and GVG.

Belongs to the adenylosuccinate synthetase family. In terms of assembly, homodimer. It depends on Mg(2+) as a cofactor.

Its subcellular location is the cytoplasm. The catalysed reaction is IMP + L-aspartate + GTP = N(6)-(1,2-dicarboxyethyl)-AMP + GDP + phosphate + 2 H(+). It functions in the pathway purine metabolism; AMP biosynthesis via de novo pathway; AMP from IMP: step 1/2. In terms of biological role, plays an important role in the de novo pathway of purine nucleotide biosynthesis. Catalyzes the first committed step in the biosynthesis of AMP from IMP. The sequence is that of Adenylosuccinate synthetase from Clostridium perfringens (strain 13 / Type A).